We begin with the raw amino-acid sequence, 554 residues long: Phospholipase B-like protein E (554 aa).

An N-terminal signal peptide occupies residues 1 to 19; that stretch reads MKLFILLIVIVFLISNSYS. Asn-113, Asn-140, Asn-231, Asn-302, Asn-340, and Asn-546 each carry an N-linked (GlcNAc...) asparagine glycan.

It belongs to the phospholipase B-like family.

The protein localises to the secreted. Functionally, probable phospholipase. The sequence is that of Phospholipase B-like protein E (plbE) from Dictyostelium discoideum (Social amoeba).